Consider the following 199-residue polypeptide: Recombination protein RecR (199 aa).

A C4-type zinc finger spans residues 57 to 72; that stretch reads CSICFNLTDTDPCAIC. Positions 80–175 constitute a Toprim domain; it reads RLLMVVEEAK…KVTRIAHGLP (96 aa).

Belongs to the RecR family.

Functionally, may play a role in DNA repair. It seems to be involved in an RecBC-independent recombinational process of DNA repair. It may act with RecF and RecO. This chain is Recombination protein RecR, found in Carboxydothermus hydrogenoformans (strain ATCC BAA-161 / DSM 6008 / Z-2901).